The following is a 294-amino-acid chain: Nucleotide-binding protein CLK_2809 (294 aa).

Residue glycine 8 to threonine 15 coordinates ATP. Position 59-62 (aspartate 59–glycine 62) interacts with GTP.

Belongs to the RapZ-like family.

Functionally, displays ATPase and GTPase activities. This chain is Nucleotide-binding protein CLK_2809, found in Clostridium botulinum (strain Loch Maree / Type A3).